The chain runs to 88 residues: MTEAKKLVRTLTGKVVSDKMEKSIVVLIERRVKHPVYGKYVSKSTKMKAHDEANDCKIGDTVTIAESRPLSKTKSWTLVKIEERATQI.

It belongs to the universal ribosomal protein uS17 family. Part of the 30S ribosomal subunit.

One of the primary rRNA binding proteins, it binds specifically to the 5'-end of 16S ribosomal RNA. The polypeptide is Small ribosomal subunit protein uS17 (Saccharophagus degradans (strain 2-40 / ATCC 43961 / DSM 17024)).